We begin with the raw amino-acid sequence, 394 residues long: 1-deoxy-D-xylulose 5-phosphate reductoisomerase (394 aa).

The NADPH site is built by Thr-6, Gly-7, Ser-8, Ile-9, Ala-32, and Asn-124. Lys-125 is a binding site for 1-deoxy-D-xylulose 5-phosphate. Glu-126 is an NADPH binding site. Residue Asp-148 participates in Mn(2+) binding. Residues Ser-149, Glu-150, Ser-174, and His-197 each contribute to the 1-deoxy-D-xylulose 5-phosphate site. Glu-150 is a binding site for Mn(2+). NADPH is bound at residue Gly-203. Residues Ser-210, Asn-215, Lys-216, and Glu-219 each contribute to the 1-deoxy-D-xylulose 5-phosphate site. Glu-219 is a Mn(2+) binding site.

The protein belongs to the DXR family. Mg(2+) is required as a cofactor. Requires Mn(2+) as cofactor.

It catalyses the reaction 2-C-methyl-D-erythritol 4-phosphate + NADP(+) = 1-deoxy-D-xylulose 5-phosphate + NADPH + H(+). Its pathway is isoprenoid biosynthesis; isopentenyl diphosphate biosynthesis via DXP pathway; isopentenyl diphosphate from 1-deoxy-D-xylulose 5-phosphate: step 1/6. Catalyzes the NADPH-dependent rearrangement and reduction of 1-deoxy-D-xylulose-5-phosphate (DXP) to 2-C-methyl-D-erythritol 4-phosphate (MEP). The sequence is that of 1-deoxy-D-xylulose 5-phosphate reductoisomerase from Streptomyces avermitilis (strain ATCC 31267 / DSM 46492 / JCM 5070 / NBRC 14893 / NCIMB 12804 / NRRL 8165 / MA-4680).